A 149-amino-acid polypeptide reads, in one-letter code: MSMSTSTELFAHHWAFAVFLLGAFGLCALMLLGAFFLGGRAKARAKHVPYESGIDSVGSARLRMSAKFYLVAMFFVIFDVEALFLYAWSVSIKESGWLGFIEASIFILVLLAGLFYLVRIGALNWTPSRSSRQVSKPSVVININNSHPQ.

The next 3 helical transmembrane spans lie at 16–36, 68–88, and 98–118; these read FAVFLLGAFGLCALMLLGAFF, FYLVAMFFVIFDVEALFLYAW, and LGFIEASIFILVLLAGLFYLV.

This sequence belongs to the complex I subunit 3 family. NDH-1 is composed of 13 different subunits. Subunits NuoA, H, J, K, L, M, N constitute the membrane sector of the complex.

It localises to the cell inner membrane. It carries out the reaction a quinone + NADH + 5 H(+)(in) = a quinol + NAD(+) + 4 H(+)(out). NDH-1 shuttles electrons from NADH, via FMN and iron-sulfur (Fe-S) centers, to quinones in the respiratory chain. The immediate electron acceptor for the enzyme in this species is believed to be ubiquinone. Couples the redox reaction to proton translocation (for every two electrons transferred, four hydrogen ions are translocated across the cytoplasmic membrane), and thus conserves the redox energy in a proton gradient. This Photorhabdus laumondii subsp. laumondii (strain DSM 15139 / CIP 105565 / TT01) (Photorhabdus luminescens subsp. laumondii) protein is NADH-quinone oxidoreductase subunit A.